A 400-amino-acid polypeptide reads, in one-letter code: Keratin, type I cytoskeletal 19 (400 aa).

A head region spans residues 1 to 79 (MTSYSYRQSS…TASDGLLAGN (79 aa)). Residue Arg7 is modified to Omega-N-methylarginine. Residues Ser14 and Ser22 each carry the phosphoserine modification. The residue at position 24 (Arg24) is an Asymmetric dimethylarginine; alternate. Arg24 is modified (omega-N-methylarginine; alternate). Arg32 is subject to Omega-N-methylarginine. A phosphoserine mark is found at Ser35 and Ser40. An omega-N-methylarginine mark is found at Arg43 and Arg51. Ser57 and Ser72 each carry phosphoserine. Residues 80–115 (EKLTMQNLNDRLASYLDKVRALEAANGELEVKIRDW) are coil 1A. One can recognise an IF rod domain in the interval 80-391 (EKLTMQNLND…SLLEGQEDHY (312 aa)). Residues 116-133 (YQKQGPGPSRDYSHYYTT) form a linker 1 region. A coil 1B region spans residues 134-225 (IQDLRDKILG…KNHEEEISTL (92 aa)). Residues 226–248 (RGQVGGQVSVEVDSAPGTDLAKI) form a linker 12 region. Residues 244 to 390 (DLAKILSDMR…RSLLEGQEDH (147 aa)) are necessary for interaction with PNN. The interval 249-387 (LSDMRSQYEV…ATYRSLLEGQ (139 aa)) is coil 2. Thr323 carries the post-translational modification Phosphothreonine. The interval 388 to 400 (EDHYNNLSASKVL) is rod-like helical tail. Tyr391 is subject to Phosphotyrosine. Phosphoserine occurs at positions 395 and 397.

This sequence belongs to the intermediate filament family. As to quaternary structure, heterotetramer of two type I and two type II keratins. Interacts with PNN and the actin-binding domain of DMD. Interacts with HCV core protein. (Microbial infection) Interacts with hepatitis C virus/HCV core protein. Expressed in a defined zone of basal keratinocytes in the deep outer root sheath of hair follicles. Also observed in sweat gland and mammary gland ductal and secretory cells, bile ducts, gastrointestinal tract, bladder urothelium, oral epithelia, esophagus, ectocervical epithelium (at protein level). Expressed in epidermal basal cells, in nipple epidermis and a defined region of the hair follicle. Also seen in a subset of vascular wall cells in both the veins and artery of human umbilical cord, and in umbilical cord vascular smooth muscle. Observed in muscle fibers accumulating in the costameres of myoplasm at the sarcolemma in structures that contain dystrophin and spectrin.

In terms of biological role, involved in the organization of myofibers. Together with KRT8, helps to link the contractile apparatus to dystrophin at the costameres of striated muscle. The chain is Keratin, type I cytoskeletal 19 (KRT19) from Homo sapiens (Human).